The sequence spans 491 residues: Malonate-semialdehyde dehydrogenase 1 (491 aa).

Positions 154, 156, 180, 183, 184, 233, and 255 each coordinate NAD(+). C288 serves as the catalytic Nucleophile. E386 is an NAD(+) binding site.

Belongs to the aldehyde dehydrogenase family. IolA subfamily. In terms of assembly, homotetramer.

It carries out the reaction 3-oxopropanoate + NAD(+) + CoA + H2O = hydrogencarbonate + acetyl-CoA + NADH + H(+). It catalyses the reaction 2-methyl-3-oxopropanoate + NAD(+) + CoA + H2O = propanoyl-CoA + hydrogencarbonate + NADH + H(+). It functions in the pathway polyol metabolism; myo-inositol degradation into acetyl-CoA; acetyl-CoA from myo-inositol: step 7/7. Its function is as follows. Catalyzes the oxidation of malonate semialdehyde (MSA) and methylmalonate semialdehyde (MMSA) into acetyl-CoA and propanoyl-CoA, respectively. Is involved in a myo-inositol catabolic pathway. Bicarbonate, and not CO2, is the end-product of the enzymatic reaction. The sequence is that of Malonate-semialdehyde dehydrogenase 1 from Shouchella clausii (strain KSM-K16) (Alkalihalobacillus clausii).